A 130-amino-acid chain; its full sequence is Large ribosomal subunit protein bL20 (130 aa).

It belongs to the bacterial ribosomal protein bL20 family.

In terms of biological role, binds directly to 23S ribosomal RNA and is necessary for the in vitro assembly process of the 50S ribosomal subunit. It is not involved in the protein synthesizing functions of that subunit. This chain is Large ribosomal subunit protein bL20, found in Salinispora tropica (strain ATCC BAA-916 / DSM 44818 / JCM 13857 / NBRC 105044 / CNB-440).